The chain runs to 438 residues: Glucosamine kinase (438 aa).

ATP contacts are provided by residues lysine 133, 186-188 (AYL), and aspartate 193. Aspartate 300 serves as a coordination point for D-glucosamine. The Mg(2+) site is built by glutamine 305, aspartate 317, and aspartate 319. The Substrate specificity determinant motif signature appears at 405 to 420 (QEVREYLYAVRHLPHW). Glutamate 409 lines the D-glucosamine pocket.

Belongs to the actinobacterial glucosamine kinase family. As to quaternary structure, monomer. Requires Mg(2+) as cofactor.

It carries out the reaction D-glucosamine + ATP = D-glucosamine 6-phosphate + ADP + H(+). Catalyzes the ATP-dependent phosphorylation of D-glucosamine (GlcN) to D-glucosamine 6-phosphate. May be involved in the phosphorylation of acquired extracellular GlcN derived from the hydrolysis of chitosan, i.e., in the incorporation of exogenous GlcN into the bacterial GlcNAc metabolism. To a lesser extent, is also active on glucose, but is unable to phosphorylate maltose, 18 other sugars and several aminoglycoside antibiotics. The protein is Glucosamine kinase of Streptacidiphilus jiangxiensis.